Here is a 243-residue protein sequence, read N- to C-terminus: 5'-methylthioadenosine/S-adenosylhomocysteine nucleosidase (243 aa).

Glu-12 (proton acceptor) is an active-site residue. Substrate is bound by residues Gly-78, Met-158, and 179 to 180 (ME). Catalysis depends on Asp-203, which acts as the Proton donor.

Belongs to the PNP/UDP phosphorylase family. MtnN subfamily.

The enzyme catalyses S-adenosyl-L-homocysteine + H2O = S-(5-deoxy-D-ribos-5-yl)-L-homocysteine + adenine. It catalyses the reaction S-methyl-5'-thioadenosine + H2O = 5-(methylsulfanyl)-D-ribose + adenine. It carries out the reaction 5'-deoxyadenosine + H2O = 5-deoxy-D-ribose + adenine. Its pathway is amino-acid biosynthesis; L-methionine biosynthesis via salvage pathway; S-methyl-5-thio-alpha-D-ribose 1-phosphate from S-methyl-5'-thioadenosine (hydrolase route): step 1/2. In terms of biological role, catalyzes the irreversible cleavage of the glycosidic bond in both 5'-methylthioadenosine (MTA) and S-adenosylhomocysteine (SAH/AdoHcy) to adenine and the corresponding thioribose, 5'-methylthioribose and S-ribosylhomocysteine, respectively. Also cleaves 5'-deoxyadenosine, a toxic by-product of radical S-adenosylmethionine (SAM) enzymes, into 5-deoxyribose and adenine. The chain is 5'-methylthioadenosine/S-adenosylhomocysteine nucleosidase from Colwellia psychrerythraea (strain 34H / ATCC BAA-681) (Vibrio psychroerythus).